The chain runs to 431 residues: Enolase (431 aa).

Gln167 is a binding site for (2R)-2-phosphoglycerate. Glu209 acts as the Proton donor in catalysis. Mg(2+) contacts are provided by Asp246, Glu289, and Asp316. 4 residues coordinate (2R)-2-phosphoglycerate: Lys341, Arg370, Ser371, and Lys392. The Proton acceptor role is filled by Lys341.

This sequence belongs to the enolase family. In terms of assembly, component of the RNA degradosome, a multiprotein complex involved in RNA processing and mRNA degradation. Mg(2+) is required as a cofactor.

The protein localises to the cytoplasm. It is found in the secreted. The protein resides in the cell surface. The enzyme catalyses (2R)-2-phosphoglycerate = phosphoenolpyruvate + H2O. It functions in the pathway carbohydrate degradation; glycolysis; pyruvate from D-glyceraldehyde 3-phosphate: step 4/5. Catalyzes the reversible conversion of 2-phosphoglycerate (2-PG) into phosphoenolpyruvate (PEP). It is essential for the degradation of carbohydrates via glycolysis. The polypeptide is Enolase (Shewanella oneidensis (strain ATCC 700550 / JCM 31522 / CIP 106686 / LMG 19005 / NCIMB 14063 / MR-1)).